The primary structure comprises 68 residues: Large ribosomal subunit protein uL30 (68 aa).

This sequence belongs to the universal ribosomal protein uL30 family. In terms of assembly, part of the 50S ribosomal subunit.

The sequence is that of Large ribosomal subunit protein uL30 from Kocuria rhizophila (strain ATCC 9341 / DSM 348 / NBRC 103217 / DC2201).